The primary structure comprises 223 residues: uncharacterized protein (223 aa).

The interval 1–30 (MASATVRNVPLLDDDTIPFGEEDEMRDPSR) is disordered. Acidic residues predominate over residues 12–25 (LDDDTIPFGEEDEM). Transmembrane regions (helical) follow at residues 35–55 (YTHP…ILIY), 56–76 (MFCG…VLFL), 129–149 (IFWL…LFAL), and 154–174 (FKWL…LYGY).

This sequence belongs to the TVP23 family.

The protein resides in the membrane. This is an uncharacterized protein from Drosophila melanogaster (Fruit fly).